A 117-amino-acid polypeptide reads, in one-letter code: Large ribosomal subunit protein bL20c (117 aa).

This sequence belongs to the bacterial ribosomal protein bL20 family.

The protein resides in the plastid. The protein localises to the chloroplast. Binds directly to 23S ribosomal RNA and is necessary for the in vitro assembly process of the 50S ribosomal subunit. It is not involved in the protein synthesizing functions of that subunit. The chain is Large ribosomal subunit protein bL20c from Draba nemorosa (Woodland whitlowgrass).